Here is a 349-residue protein sequence, read N- to C-terminus: Holliday junction branch migration complex subunit RuvB (349 aa).

Positions 1–185 (MSQEKERLIS…FGSIFRLDFY (185 aa)) are large ATPase domain (RuvB-L). ATP contacts are provided by residues L24, R25, G66, K69, T70, T71, 132–134 (EDY), R175, Y185, and R222. Position 70 (T70) interacts with Mg(2+). The segment at 186–256 (DEEAIHDIVR…IAAESLACLE (71 aa)) is small ATPAse domain (RuvB-S). A head domain (RuvB-H) region spans residues 259–349 (KLGLDEIDHK…QQGLWTENGS (91 aa)). DNA is bound by residues R314 and R319.

Belongs to the RuvB family. In terms of assembly, homohexamer. Forms an RuvA(8)-RuvB(12)-Holliday junction (HJ) complex. HJ DNA is sandwiched between 2 RuvA tetramers; dsDNA enters through RuvA and exits via RuvB. An RuvB hexamer assembles on each DNA strand where it exits the tetramer. Each RuvB hexamer is contacted by two RuvA subunits (via domain III) on 2 adjacent RuvB subunits; this complex drives branch migration. In the full resolvosome a probable DNA-RuvA(4)-RuvB(12)-RuvC(2) complex forms which resolves the HJ.

The protein localises to the cytoplasm. It catalyses the reaction ATP + H2O = ADP + phosphate + H(+). The RuvA-RuvB-RuvC complex processes Holliday junction (HJ) DNA during genetic recombination and DNA repair, while the RuvA-RuvB complex plays an important role in the rescue of blocked DNA replication forks via replication fork reversal (RFR). RuvA specifically binds to HJ cruciform DNA, conferring on it an open structure. The RuvB hexamer acts as an ATP-dependent pump, pulling dsDNA into and through the RuvAB complex. RuvB forms 2 homohexamers on either side of HJ DNA bound by 1 or 2 RuvA tetramers; 4 subunits per hexamer contact DNA at a time. Coordinated motions by a converter formed by DNA-disengaged RuvB subunits stimulates ATP hydrolysis and nucleotide exchange. Immobilization of the converter enables RuvB to convert the ATP-contained energy into a lever motion, pulling 2 nucleotides of DNA out of the RuvA tetramer per ATP hydrolyzed, thus driving DNA branch migration. The RuvB motors rotate together with the DNA substrate, which together with the progressing nucleotide cycle form the mechanistic basis for DNA recombination by continuous HJ branch migration. Branch migration allows RuvC to scan DNA until it finds its consensus sequence, where it cleaves and resolves cruciform DNA. This is Holliday junction branch migration complex subunit RuvB from Dehalococcoides mccartyi (strain CBDB1).